The chain runs to 243 residues: uncharacterized protein (243 aa).

It belongs to the mycobacterial PPE family.

The protein resides in the cell membrane. This is an uncharacterized protein from Mycobacterium tuberculosis (strain CDC 1551 / Oshkosh).